Reading from the N-terminus, the 200-residue chain is Small ribosomal subunit protein uS4 (200 aa).

The region spanning Ser-92–Val-155 is the S4 RNA-binding domain.

The protein belongs to the universal ribosomal protein uS4 family. As to quaternary structure, part of the 30S ribosomal subunit. Contacts protein S5. The interaction surface between S4 and S5 is involved in control of translational fidelity.

Functionally, one of the primary rRNA binding proteins, it binds directly to 16S rRNA where it nucleates assembly of the body of the 30S subunit. With S5 and S12 plays an important role in translational accuracy. The chain is Small ribosomal subunit protein uS4 from Macrococcus caseolyticus (strain JCSC5402) (Macrococcoides caseolyticum).